Reading from the N-terminus, the 170-residue chain is NADH-quinone oxidoreductase subunit B (170 aa).

[4Fe-4S] cluster-binding residues include C46, C47, C111, and C141.

It belongs to the complex I 20 kDa subunit family. As to quaternary structure, NDH-1 is composed of 14 different subunits. Subunits NuoB, C, D, E, F, and G constitute the peripheral sector of the complex. [4Fe-4S] cluster is required as a cofactor.

It localises to the cell membrane. The enzyme catalyses a quinone + NADH + 5 H(+)(in) = a quinol + NAD(+) + 4 H(+)(out). In terms of biological role, NDH-1 shuttles electrons from NADH, via FMN and iron-sulfur (Fe-S) centers, to quinones in the respiratory chain. The immediate electron acceptor for the enzyme in this species is believed to be a menaquinone. Couples the redox reaction to proton translocation (for every two electrons transferred, four hydrogen ions are translocated across the cytoplasmic membrane), and thus conserves the redox energy in a proton gradient. This chain is NADH-quinone oxidoreductase subunit B, found in Geobacillus thermodenitrificans (strain NG80-2).